The sequence spans 305 residues: ATP synthase subunit gamma, mitochondrial (305 aa).

This sequence belongs to the ATPase gamma chain family. As to quaternary structure, F-type ATPases have 2 components, F(1) - the catalytic core - and F(o) - the membrane proton channel. F(1) has five subunits: alpha(3), beta(3), gamma(1), delta(1), epsilon(1), plus the additional subunit P18 (Tb427.05.1710) that is not present in F(1)F(o) ATP synthase from metazoa. Subunit P18 (Tb927.5.1710) interacts with the alpha subunit with a 1:1 stoichiometry; the interaction is direct. Subunit gamma is part of the central stalk. F(o) has three main subunits: a, b and c. The trypanosomal ATPase complex contains additional subunits that are not present in the F(1)F(o) ATP synthase from metazoa.

Its subcellular location is the mitochondrion. The protein localises to the mitochondrion inner membrane. Its function is as follows. Mitochondrial membrane ATP synthase (F(1)F(o) ATP synthase) produces ATP from ADP in the presence of a proton gradient across the membrane which is generated by electron transport complexes of the respiratory chain. F-type ATPases consist of two structural domains, F(1) - containing the extramembraneous catalytic core, and F(o) - containing the membrane proton channel, linked together by a central stalk and a peripheral stalk. During catalysis, ATP synthesis in the catalytic domain of F(1) is coupled via a rotary mechanism of the central stalk subunits to proton translocation. Subunits alpha and beta form the catalytic core in F(1). Rotation of the central stalk against the surrounding alpha(3)beta(3) subunits leads to hydrolysis of ATP in three separate catalytic sites on the beta subunits. Contrary to the procyclic, insect form that requires F(1)F(o) ATP synthase for ATP synthesis, the bloodstream form relies on ATP hydrolysis by F(1)F(o) ATP synthase to maintain its mitochondrial membrane potential. The protein is ATP synthase subunit gamma, mitochondrial of Trypanosoma brucei brucei.